Here is a 575-residue protein sequence, read N- to C-terminus: Alpha-(1,6)-fucosyltransferase (575 aa).

Topologically, residues 1-9 are cytoplasmic; sequence MRPWTGSWR. A helical; Signal-anchor for type II membrane protein membrane pass occupies residues 10-30; it reads WIMLILFAWGTLLFYIGGHLV. Topologically, residues 31–575 are lumenal; the sequence is RDNDHPDHSS…KYPTYPEAEK (545 aa). Intrachain disulfides connect cysteine 204–cysteine 266, cysteine 212–cysteine 230, and cysteine 218–cysteine 222. The region spanning 206–493 is the GT23 domain; it reads KAKKLVCNIN…PDASANFHSL (288 aa). Residue serine 278 is modified to Phosphoserine. The SH3-binding motif lies at 299-305; that stretch reads PRPPYLP. The segment at 365–366 is important for donor substrate binding; that stretch reads RR. A disulfide bond links cysteine 465 and cysteine 472. The SH3 domain maps to 502–563; the sequence is QNAHNQIAIY…PSYKVREKIE (62 aa).

This sequence belongs to the glycosyltransferase 23 family. Tyrosine phosphorylated by PKDCC/VLK.

It is found in the golgi apparatus. Its subcellular location is the golgi stack membrane. It catalyses the reaction N(4)-{beta-D-GlcNAc-(1-&gt;2)-alpha-D-Man-(1-&gt;3)-[beta-D-GlcNAc-(1-&gt;2)-alpha-D-Man-(1-&gt;6)]-beta-D-Man-(1-&gt;4)-beta-D-GlcNAc-(1-&gt;4)-beta-D-GlcNAc}-L-asparaginyl-[protein] + GDP-beta-L-fucose = an N(4)-{beta-D-GlcNAc-(1-&gt;2)-alpha-D-Man-(1-&gt;3)-[beta-D-GlcNAc-(1-&gt;2)-alpha-D-Man-(1-&gt;6)]-beta-D-Man-(1-&gt;4)-beta-D-GlcNAc-(1-&gt;4)-[alpha-L-Fuc-(1-&gt;6)]-beta-D-GlcNAc}-L-asparaginyl-[protein] + GDP + H(+). It functions in the pathway protein modification; protein glycosylation. In terms of biological role, catalyzes the addition of fucose in alpha 1-6 linkage to the first GlcNAc residue, next to the peptide chains in N-glycans. The sequence is that of Alpha-(1,6)-fucosyltransferase (FUT8) from Canis lupus familiaris (Dog).